The primary structure comprises 119 residues: Small ribosomal subunit protein bS16 (119 aa).

Residues 89–103 show a composition bias toward basic and acidic residues; that stretch reads TTKSTKEKAATDKKA. The tract at residues 89–119 is disordered; sequence TTKSTKEKAATDKKAKVTKKPKTKTTTDVKK.

This sequence belongs to the bacterial ribosomal protein bS16 family.

The sequence is that of Small ribosomal subunit protein bS16 from Spiroplasma kunkelii.